Reading from the N-terminus, the 311-residue chain is Putative ankyrin repeat protein RF_0923 (311 aa).

ANK repeat units lie at residues 42-71 (IDNTALIWAVDKGLEKVCEMLIPKMSEQAI), 77-106 (NGNTALTLAASKGLEKICELLIPKMSPQAI), 112-141 (NGNTALTWAAWKDLEKICEMLIPKMSPQAI), 147-176 (NGNTALILAAWKGLEKICKILIPKMFEQAI), and 182-213 (KGCTALTLAADKDLKKIYELLINKMSIDAINH).

The chain is Putative ankyrin repeat protein RF_0923 from Rickettsia felis (strain ATCC VR-1525 / URRWXCal2) (Rickettsia azadi).